A 658-amino-acid chain; its full sequence is Threonine--tRNA ligase (658 aa).

Residues M1–E61 enclose the TGS domain. The segment at D259–P554 is catalytic. Zn(2+)-binding residues include C353, H404, and H531.

The protein belongs to the class-II aminoacyl-tRNA synthetase family. In terms of assembly, homodimer. Requires Zn(2+) as cofactor.

It is found in the cytoplasm. It carries out the reaction tRNA(Thr) + L-threonine + ATP = L-threonyl-tRNA(Thr) + AMP + diphosphate + H(+). Its function is as follows. Catalyzes the attachment of threonine to tRNA(Thr) in a two-step reaction: L-threonine is first activated by ATP to form Thr-AMP and then transferred to the acceptor end of tRNA(Thr). Also edits incorrectly charged L-seryl-tRNA(Thr). In Streptomyces coelicolor (strain ATCC BAA-471 / A3(2) / M145), this protein is Threonine--tRNA ligase.